A 181-amino-acid polypeptide reads, in one-letter code: ATP-dependent protease subunit HslV (181 aa).

T7 is an active-site residue. Na(+)-binding residues include A166, C169, and T172.

This sequence belongs to the peptidase T1B family. HslV subfamily. In terms of assembly, a double ring-shaped homohexamer of HslV is capped on each side by a ring-shaped HslU homohexamer. The assembly of the HslU/HslV complex is dependent on binding of ATP.

The protein resides in the cytoplasm. The catalysed reaction is ATP-dependent cleavage of peptide bonds with broad specificity.. With respect to regulation, allosterically activated by HslU binding. Protease subunit of a proteasome-like degradation complex believed to be a general protein degrading machinery. This chain is ATP-dependent protease subunit HslV, found in Anaeromyxobacter dehalogenans (strain 2CP-C).